The chain runs to 309 residues: Tagatose-6-phosphate kinase (309 aa).

Belongs to the carbohydrate kinase PfkB family. LacC subfamily.

It catalyses the reaction D-tagatofuranose 6-phosphate + ATP = D-tagatofuranose 1,6-bisphosphate + ADP + H(+). Its pathway is carbohydrate metabolism; D-tagatose 6-phosphate degradation; D-glyceraldehyde 3-phosphate and glycerone phosphate from D-tagatose 6-phosphate: step 1/2. The protein is Tagatose-6-phosphate kinase of Streptococcus pyogenes serotype M12 (strain MGAS2096).